Reading from the N-terminus, the 101-residue chain is Gene 30 protein (101 aa).

The protein is Gene 30 protein (30) of Mycobacterium phage L5 (Mycobacteriophage L5).